A 215-amino-acid polypeptide reads, in one-letter code: MKFFIDTANINEIKEANELGVLAGVTTNPSLVAKEGVDFHERIREICNVVEGPVSAEVISLEADKMIEEGKELAKIAPNVVVKVPMTTEGLKAVKAFSDLGIRTNVTLVFSAVQALLAARAGATYVSPFLGRLDDIGHNGMDLIRQIAEIFAIHGIETEIIAASVRHSVHVTDAALNGAHIATIPANVIASLVKHPLTDQGIEKFLADWEKTQEK.

Catalysis depends on Lys-83, which acts as the Schiff-base intermediate with substrate.

It belongs to the transaldolase family. Type 3B subfamily.

The protein localises to the cytoplasm. It carries out the reaction D-sedoheptulose 7-phosphate + D-glyceraldehyde 3-phosphate = D-erythrose 4-phosphate + beta-D-fructose 6-phosphate. The protein operates within carbohydrate degradation; pentose phosphate pathway; D-glyceraldehyde 3-phosphate and beta-D-fructose 6-phosphate from D-ribose 5-phosphate and D-xylulose 5-phosphate (non-oxidative stage): step 2/3. Its function is as follows. Transaldolase is important for the balance of metabolites in the pentose-phosphate pathway. In Bacillus cereus (strain ATCC 14579 / DSM 31 / CCUG 7414 / JCM 2152 / NBRC 15305 / NCIMB 9373 / NCTC 2599 / NRRL B-3711), this protein is Probable transaldolase 1.